We begin with the raw amino-acid sequence, 71 residues long: uncharacterized protein (71 aa).

The protein localises to the plastid. It localises to the chloroplast. This is an uncharacterized protein from Mesostigma viride (Green alga).